A 179-amino-acid chain; its full sequence is Large ribosomal subunit protein uL6 (179 aa).

It belongs to the universal ribosomal protein uL6 family. Part of the 50S ribosomal subunit.

This protein binds to the 23S rRNA, and is important in its secondary structure. It is located near the subunit interface in the base of the L7/L12 stalk, and near the tRNA binding site of the peptidyltransferase center. This Spiroplasma kunkelii protein is Large ribosomal subunit protein uL6.